Consider the following 458-residue polypeptide: Oxysterol-binding protein-related protein 3B (458 aa).

Disordered stretches follow at residues 47 to 66 (VINP…RGRW), 370 to 401 (DMSK…AFTP), and 431 to 458 (RAAA…DLST). Over residues 375–396 (GYEKSSMEERQRAEKRTREEKG) the composition is skewed to basic and acidic residues. Over residues 443 to 458 (PKSIQFNPWQFQDLST) the composition is skewed to polar residues.

This sequence belongs to the OSBP family. As to expression, expressed in roots, leaves, stems and flowers.

Its function is as follows. May be involved in the transport of sterols. The protein is Oxysterol-binding protein-related protein 3B (ORP3B) of Arabidopsis thaliana (Mouse-ear cress).